We begin with the raw amino-acid sequence, 471 residues long: UDP-N-acetylmuramate--L-alanine ligase (471 aa).

Residue 114–120 (GTHGKTT) coordinates ATP.

Belongs to the MurCDEF family.

The protein resides in the cytoplasm. The catalysed reaction is UDP-N-acetyl-alpha-D-muramate + L-alanine + ATP = UDP-N-acetyl-alpha-D-muramoyl-L-alanine + ADP + phosphate + H(+). It participates in cell wall biogenesis; peptidoglycan biosynthesis. Cell wall formation. The chain is UDP-N-acetylmuramate--L-alanine ligase from Allorhizobium ampelinum (strain ATCC BAA-846 / DSM 112012 / S4) (Agrobacterium vitis (strain S4)).